A 268-amino-acid chain; its full sequence is Thiazole synthase (268 aa).

Lys100 acts as the Schiff-base intermediate with DXP in catalysis. Residues Gly161, 187 to 188 (AG), and 209 to 210 (NT) each bind 1-deoxy-D-xylulose 5-phosphate. The disordered stretch occupies residues 248 to 268 (ASPSSPAEGMFTGTQHPAANS). Over residues 259–268 (TGTQHPAANS) the composition is skewed to polar residues.

Belongs to the ThiG family. As to quaternary structure, homotetramer. Forms heterodimers with either ThiH or ThiS.

It localises to the cytoplasm. The catalysed reaction is [ThiS sulfur-carrier protein]-C-terminal-Gly-aminoethanethioate + 2-iminoacetate + 1-deoxy-D-xylulose 5-phosphate = [ThiS sulfur-carrier protein]-C-terminal Gly-Gly + 2-[(2R,5Z)-2-carboxy-4-methylthiazol-5(2H)-ylidene]ethyl phosphate + 2 H2O + H(+). Its pathway is cofactor biosynthesis; thiamine diphosphate biosynthesis. Catalyzes the rearrangement of 1-deoxy-D-xylulose 5-phosphate (DXP) to produce the thiazole phosphate moiety of thiamine. Sulfur is provided by the thiocarboxylate moiety of the carrier protein ThiS. In vitro, sulfur can be provided by H(2)S. This chain is Thiazole synthase, found in Nitrosomonas europaea (strain ATCC 19718 / CIP 103999 / KCTC 2705 / NBRC 14298).